We begin with the raw amino-acid sequence, 282 residues long: 5'-adenylylsulfate reductase-like 2 (282 aa).

The N-terminal stretch at M1–A19 is a signal peptide. In terms of domain architecture, Thioredoxin spans G20 to G159. Residue N134 is glycosylated (N-linked (GlcNAc...) asparagine). The helical transmembrane segment at A205–V225 threads the bilayer.

The protein resides in the membrane. The sequence is that of 5'-adenylylsulfate reductase-like 2 (APRL2) from Oryza sativa subsp. japonica (Rice).